We begin with the raw amino-acid sequence, 479 residues long: Glucan 1,3-beta-glucosidase 2 (479 aa).

The signal sequence occupies residues 1 to 21 (MMLFLIHLMALCCMFVAEVAC). N-linked (GlcNAc...) asparagine glycosylation is found at Asn-25, Asn-29, Asn-63, Asn-104, Asn-187, and Asn-193. The Proton donor role is filled by Glu-227. Asn-254, Asn-285, and Asn-288 each carry an N-linked (GlcNAc...) asparagine glycan. His-306 acts as the Nucleophile in catalysis. Asn-318 and Asn-451 each carry an N-linked (GlcNAc...) asparagine glycan. Residue Ser-456 is the site of GPI-anchor amidated serine attachment. A propeptide spans 457–479 (SASAIASNKMTLLLAFLLVILVI) (removed in mature form).

It belongs to the glycosyl hydrolase 5 (cellulase A) family. In terms of processing, predicted to be a substrate for cleavage by KEX2.

The protein resides in the cell membrane. Its subcellular location is the secreted. It catalyses the reaction Successive hydrolysis of beta-D-glucose units from the non-reducing ends of (1-&gt;3)-beta-D-glucans, releasing alpha-glucose.. In terms of biological role, beta-glucanases participate in the metabolism of beta-glucan, the main structural component of the cell wall. EXG2 is not heavily involved in the exoglucanase function of the adhesion process. The chain is Glucan 1,3-beta-glucosidase 2 (EXG2) from Candida albicans (strain SC5314 / ATCC MYA-2876) (Yeast).